Reading from the N-terminus, the 505-residue chain is Maturase K (505 aa).

It belongs to the intron maturase 2 family. MatK subfamily.

The protein resides in the plastid. It is found in the chloroplast. In terms of biological role, usually encoded in the trnK tRNA gene intron. Probably assists in splicing its own and other chloroplast group II introns. The polypeptide is Maturase K (Amaranthus greggii (Gregg's amaranth)).